Reading from the N-terminus, the 105-residue chain is Transcriptional regulator SutA (105 aa).

Over residues 1-37 the composition is skewed to acidic residues; sequence MSEEELEQDELDGADEDDGEELAAADDGEADSSDGDE. A disordered region spans residues 1–105; it reads MSEEELEQDE…PDSKYGSRPI (105 aa). 2 stretches are compositionally biased toward basic and acidic residues: residues 59-83 and 92-105; these read AKQK…KVQE and PPKK…SRPI.

In terms of assembly, interacts with RNA polymerase.

In terms of biological role, causes widespread changes in gene expression, and plays a direct role in the regulation of genes encoding ribosomal components. Associates with chromosomal DNA through interaction with RNA polymerase. Contributes to biofilm formation and secondary metabolite production. Important during transitions to and from the survival state. The sequence is that of Transcriptional regulator SutA from Pseudomonas aeruginosa (strain UCBPP-PA14).